Here is a 385-residue protein sequence, read N- to C-terminus: Prepilin peptidase EppA (385 aa).

A run of 10 helical transmembrane segments spans residues 1–21 (MILM…CFYA), 29–49 (GIIP…LNGA), 58–78 (WIFI…YILW), 80–100 (MVAW…LLPF), 104–124 (LVSY…PFPL), 126–146 (VIIN…FFII), 166–186 (TSMV…LITD), 187–207 (FLPF…TMVI), 231–251 (FELT…IQLI), and 358–378 (PAIF…MILF).

Belongs to the peptidase A24 family.

It localises to the cell membrane. Its function is as follows. Peptidase that processes the N-terminus of prepilins. This is Prepilin peptidase EppA from Methanothermobacter thermautotrophicus (strain ATCC 29096 / DSM 1053 / JCM 10044 / NBRC 100330 / Delta H) (Methanobacterium thermoautotrophicum).